The following is a 1744-amino-acid chain: Probable disease resistance protein At4g19520 (1744 aa).

The TIR 1 domain occupies 3–163; sequence DGKEVYISFN…KIVADVRQKL (161 aa). Glu80 is an active-site residue. Positions 192–411 constitute an NB-ARC domain; it reads SLGIWGMAGI…VSEKEIFLDI (220 aa). LRR repeat units lie at residues 503-526, 557-581, 583-602, 603-626, 648-669, 670-692, 710-733, 734-754, 755-777, 779-802, 804-823, 824-846, 848-871, 892-915, 917-939, 941-963, 987-1010, 1011-1035, 1037-1059, and 1062-1086; these read YEDVKAINLDTSNLPFKGHIAFQH, PPELRLLHWTCYPLHSFPQNFGFQY, VELNMPCSKLKKLWGGTKNL, EVLKRITLSCSVQLLNVDELQYSP, LQHLRIVDLSTCKKIKSFPKVP, PSIRKLHLQGTGIRDLSSLNHSS, DHRKQVLKLKDSSHLGSLPDIVIF, ESLEVLDFSGCSELEDIQGFP, QNLKRLYLAKTAIKEVPSSLCHH, SKLVKLDMENCERLRDLPMGMSNM, YLAVLKLSGCSNLENIKELP, RNLKELYLAGTAVKEFPSTLLET, SEVVLLDLENCKKLQGLPTGMSKL, PLNLIELYLAGTAIRELPPSIGDL, LLDTLDLKNCNRLRHLPMEMHNL, PLKVLDLSNCSELEVFTSSLPKV, YEHRVTLSLYKARLQYIPEEIRWM, PSLKTLDLSRNGFTEVPVSIKDFSK, LSLRLRYCENLRSLPQLPRSLQL, and AHGCSSLQLITPDFKQLPRYYTFSN. The 161-residue stretch at 1399 to 1559 folds into the TIR 2 domain; the sequence is RNNDVFVSFH…KVANDIRKKL (161 aa).

The protein belongs to the disease resistance TIR-NB-LRR family.

The catalysed reaction is NAD(+) + H2O = ADP-D-ribose + nicotinamide + H(+). In terms of biological role, probable disease resistance protein. The sequence is that of Probable disease resistance protein At4g19520 from Arabidopsis thaliana (Mouse-ear cress).